A 525-amino-acid polypeptide reads, in one-letter code: Phospho-2-dehydro-3-deoxyheptonate aldolase 1, chloroplastic (525 aa).

The segment covering 1 to 13 (MALSNASSLSTRS) has biased composition (polar residues). The interval 1–35 (MALSNASSLSTRSIYGGDLSHRPSNRQSSFTFHPA) is disordered. The N-terminal 52 residues, 1–52 (MALSNASSLSTRSIYGGDLSHRPSNRQSSFTFHPAVNTKPKSVNLVTAVHAA), are a transit peptide targeting the chloroplast.

Belongs to the class-II DAHP synthase family.

The protein localises to the plastid. It is found in the chloroplast. It catalyses the reaction D-erythrose 4-phosphate + phosphoenolpyruvate + H2O = 7-phospho-2-dehydro-3-deoxy-D-arabino-heptonate + phosphate. Its pathway is metabolic intermediate biosynthesis; chorismate biosynthesis; chorismate from D-erythrose 4-phosphate and phosphoenolpyruvate: step 1/7. The chain is Phospho-2-dehydro-3-deoxyheptonate aldolase 1, chloroplastic (DHS1) from Arabidopsis thaliana (Mouse-ear cress).